Here is a 208-residue protein sequence, read N- to C-terminus: Outer-membrane lipoprotein carrier protein (208 aa).

Residues 1–21 form the signal peptide; the sequence is MKRTATLLVVALILALNTAQA.

This sequence belongs to the LolA family. As to quaternary structure, monomer.

The protein localises to the periplasm. Functionally, participates in the translocation of lipoproteins from the inner membrane to the outer membrane. Only forms a complex with a lipoprotein if the residue after the N-terminal Cys is not an aspartate (The Asp acts as a targeting signal to indicate that the lipoprotein should stay in the inner membrane). The sequence is that of Outer-membrane lipoprotein carrier protein from Halorhodospira halophila (strain DSM 244 / SL1) (Ectothiorhodospira halophila (strain DSM 244 / SL1)).